A 132-amino-acid chain; its full sequence is Translation initiation factor 5A (132 aa).

Lysine 36 carries the post-translational modification Hypusine.

Belongs to the eIF-5A family.

The protein localises to the cytoplasm. Its function is as follows. Functions by promoting the formation of the first peptide bond. The polypeptide is Translation initiation factor 5A (eIF5A) (Thermofilum pendens (strain DSM 2475 / Hrk 5)).